The sequence spans 496 residues: Alanine aminotransferase 1 (496 aa).

Alanine 2 is subject to N-acetylalanine. Threonine 22 carries the phosphothreonine modification. Lysine 314 carries the post-translational modification N6-(pyridoxal phosphate)lysine.

Belongs to the class-I pyridoxal-phosphate-dependent aminotransferase family. Alanine aminotransferase subfamily. In terms of assembly, homodimer. Requires pyridoxal 5'-phosphate as cofactor. As to expression, mainly expressed in liver, intestine, colon and white adipose tissue.

It is found in the cytoplasm. The catalysed reaction is L-alanine + 2-oxoglutarate = pyruvate + L-glutamate. It participates in amino-acid degradation; L-alanine degradation via transaminase pathway; pyruvate from L-alanine: step 1/1. Catalyzes the reversible transamination between alanine and 2-oxoglutarate to form pyruvate and glutamate. Participates in cellular nitrogen metabolism and also in liver gluconeogenesis starting with precursors transported from skeletal muscles. The protein is Alanine aminotransferase 1 (Gpt) of Mus musculus (Mouse).